The following is a 741-amino-acid chain: Exostosin-1b (741 aa).

Residues Met1–Tyr7 are Cytoplasmic-facing. A helical; Signal-anchor for type II membrane protein transmembrane segment spans residues Leu8 to Val28. Topologically, residues Pro29–Leu741 are lumenal. N-linked (GlcNAc...) asparagine glycosylation is found at Asn84 and Asn325. UDP-N-acetyl-alpha-D-glucosamine-binding residues include Arg435, Arg544, Asp560, Glu561, Asp562, Glu648, Asp649, and Arg696. Asp562 contributes to the Mn(2+) binding site. Cys647 and Cys699 are disulfide-bonded. Residue Asp649 is part of the active site.

Belongs to the glycosyltransferase 47 family. Mn(2+) is required as a cofactor.

The protein resides in the endoplasmic reticulum membrane. It catalyses the reaction 3-O-{[(1-&gt;4)-beta-D-GlcA-(1-&gt;4)-alpha-D-GlcNAc](n)-(1-&gt;4)-beta-D-GlcA-(1-&gt;3)-beta-D-Gal-(1-&gt;3)-beta-D-Gal-(1-&gt;4)-beta-D-Xyl}-L-seryl-[protein] + UDP-N-acetyl-alpha-D-glucosamine = 3-O-{alpha-D-GlcNAc-[(1-&gt;4)-beta-D-GlcA-(1-&gt;4)-alpha-D-GlcNAc](n)-(1-&gt;4)-beta-D-GlcA-(1-&gt;3)-beta-D-Gal-(1-&gt;3)-beta-D-Gal-(1-&gt;4)-beta-D-Xyl}-L-seryl-[protein] + UDP + H(+). The catalysed reaction is 3-O-{alpha-D-GlcNAc-[(1-&gt;4)-beta-D-GlcA-(1-&gt;4)-alpha-D-GlcNAc](n)-(1-&gt;4)-beta-D-GlcA-(1-&gt;3)-beta-D-Gal-(1-&gt;3)-beta-D-Gal-(1-&gt;4)-beta-D-Xyl}-L-seryl-[protein] + UDP-alpha-D-glucuronate = 3-O-{[(1-&gt;4)-beta-D-GlcA-(1-&gt;4)-alpha-D-GlcNAc](n+1)-(1-&gt;4)-beta-D-GlcA-(1-&gt;3)-beta-D-Gal-(1-&gt;3)-beta-D-Gal-(1-&gt;4)-beta-D-Xyl}-L-seryl-[protein] + UDP + H(+). The protein operates within protein modification; protein glycosylation. Functionally, glycosyltransferase required for the biosynthesis of heparan-sulfate. The sequence is that of Exostosin-1b (ext1b) from Danio rerio (Zebrafish).